We begin with the raw amino-acid sequence, 443 residues long: Major royal jelly protein 7 (443 aa).

Residues 1 to 17 (MTRWLFMVACLGIACQG) form the signal peptide. N-linked (GlcNAc...) asparagine glycosylation is found at Asn-145, Asn-161, Asn-178, and Asn-321.

This sequence belongs to the major royal jelly protein family. As to expression, found in and secreted from the hypopharyngeal glands of the worker honey bee (at protein level); expression peaks at 12 days post eclosion. Expressed in the brains of adult worker bees peaking at 12 days post eclosion (at protein level). Expressed in the spermatheca of adult queen bees (at protein level); Expression levels are higher in mated queens than in virgin queens.

It localises to the secreted. Its function is as follows. Component of royal jelly, a substance produced in the hypopharyngeal gland containing proteins, free amino acids, fatty acids, sugars and other nutrients, which is fed to developing larvae by worker nurse bees. All larvae are fed some royal jelly (also known as worker jelly) early in their development but it forms the principal source of nutrition for larvae destined to become queen bees. Produced in the spermatheca of adult queen bees, along with other major royal jelly proteins, where it may act as a nutrient supply for sperm stored by mated queens, or be involved in energy metabolism. The protein is Major royal jelly protein 7 of Apis mellifera (Honeybee).